Consider the following 297-residue polypeptide: Ribosomal RNA small subunit methyltransferase H (297 aa).

Residues 36 to 38 (GGH), D56, L90, D104, and H111 each bind S-adenosyl-L-methionine.

This sequence belongs to the methyltransferase superfamily. RsmH family.

The protein resides in the cytoplasm. The catalysed reaction is cytidine(1402) in 16S rRNA + S-adenosyl-L-methionine = N(4)-methylcytidine(1402) in 16S rRNA + S-adenosyl-L-homocysteine + H(+). Specifically methylates the N4 position of cytidine in position 1402 (C1402) of 16S rRNA. This Dictyoglomus thermophilum (strain ATCC 35947 / DSM 3960 / H-6-12) protein is Ribosomal RNA small subunit methyltransferase H.